A 665-amino-acid polypeptide reads, in one-letter code: ELMO family protein LMO1 (665 aa).

Forms an active heterodimer with DCK1.

It localises to the cytoplasm. It is found in the mitochondrion. Functionally, forms a transiant heterodimeric complex with DCK1, that acts as a guanine nucleotide exchange factor (GEF) for the small GTPase RHO5. DCK1, LMO1 and RHO5 relocate to mitochondria upon oxidative stress and trigger cell death. The DCK1/LMO1/RHO5 signaling module mediates mitochondrial turnover under nitrogen starvation conditions via mitophagy. The DCK1/LMO1/RHO5 signaling module also plays a role in cell wall integrity signaling. This is ELMO family protein LMO1 from Saccharomyces cerevisiae (strain ATCC 204508 / S288c) (Baker's yeast).